A 449-amino-acid polypeptide reads, in one-letter code: L-seryl-tRNA(Sec) selenium transferase (449 aa).

N6-(pyridoxal phosphate)lysine is present on K286.

It belongs to the SelA family. Pyridoxal 5'-phosphate serves as cofactor.

It is found in the cytoplasm. It catalyses the reaction L-seryl-tRNA(Sec) + selenophosphate + H(+) = L-selenocysteinyl-tRNA(Sec) + phosphate. The protein operates within aminoacyl-tRNA biosynthesis; selenocysteinyl-tRNA(Sec) biosynthesis; selenocysteinyl-tRNA(Sec) from L-seryl-tRNA(Sec) (bacterial route): step 1/1. In terms of biological role, converts seryl-tRNA(Sec) to selenocysteinyl-tRNA(Sec) required for selenoprotein biosynthesis. In Sulfurimonas denitrificans (strain ATCC 33889 / DSM 1251) (Thiomicrospira denitrificans (strain ATCC 33889 / DSM 1251)), this protein is L-seryl-tRNA(Sec) selenium transferase.